Here is a 156-residue protein sequence, read N- to C-terminus: Large ribosomal subunit protein uL15 (156 aa).

A compositionally biased stretch (basic and acidic residues) spans 1–13 (MKLNEIKDNEGAT). The segment at 1–39 (MKLNEIKDNEGATKNRKRLGRGIGSGSGKTAGRGVKGQK) is disordered. Residues 21–35 (RGIGSGSGKTAGRGV) are compositionally biased toward gly residues.

This sequence belongs to the universal ribosomal protein uL15 family. In terms of assembly, part of the 50S ribosomal subunit.

In terms of biological role, binds to the 23S rRNA. The sequence is that of Large ribosomal subunit protein uL15 from Rhizobium meliloti (strain 1021) (Ensifer meliloti).